We begin with the raw amino-acid sequence, 72 residues long: Translation initiation factor IF-1 (72 aa).

The S1-like domain occupies Met-1–Lys-72.

This sequence belongs to the IF-1 family. Component of the 30S ribosomal translation pre-initiation complex which assembles on the 30S ribosome in the order IF-2 and IF-3, IF-1 and N-formylmethionyl-tRNA(fMet); mRNA recruitment can occur at any time during PIC assembly.

The protein resides in the cytoplasm. Its function is as follows. One of the essential components for the initiation of protein synthesis. Stabilizes the binding of IF-2 and IF-3 on the 30S subunit to which N-formylmethionyl-tRNA(fMet) subsequently binds. Helps modulate mRNA selection, yielding the 30S pre-initiation complex (PIC). Upon addition of the 50S ribosomal subunit IF-1, IF-2 and IF-3 are released leaving the mature 70S translation initiation complex. The chain is Translation initiation factor IF-1 from Sulfurovum sp. (strain NBC37-1).